Consider the following 222-residue polypeptide: UPF0758 protein YicR (222 aa).

One can recognise an MPN domain in the interval 100–222; sequence PLLSPEMTRE…YVSFAERGWI (123 aa). Residues His-171, His-173, and Asp-184 each coordinate Zn(2+). Residues 171-184 carry the JAMM motif motif; that stretch reads HNHPSGCAEPSKAD.

This sequence belongs to the UPF0758 family. YicR subfamily.

The protein is UPF0758 protein YicR of Escherichia coli O81 (strain ED1a).